Here is a 181-residue protein sequence, read N- to C-terminus: TATA-box-binding protein (181 aa).

2 repeat units span residues 7–83 (IVNV…IKEL) and 98–173 (VQNM…SKTL).

Belongs to the TBP family.

In terms of biological role, general factor that plays a role in the activation of archaeal genes transcribed by RNA polymerase. Binds specifically to the TATA box promoter element which lies close to the position of transcription initiation. In Methanococcus maripaludis (strain C6 / ATCC BAA-1332), this protein is TATA-box-binding protein.